The following is a 330-amino-acid chain: GMP reductase (330 aa).

The active-site Thioimidate intermediate is the Cys180. NADP(+) is bound at residue 209 to 232; that stretch reads LIADGGIRHNGDIAKSVRFGASMV.

It belongs to the IMPDH/GMPR family. GuaC type 2 subfamily.

The enzyme catalyses IMP + NH4(+) + NADP(+) = GMP + NADPH + 2 H(+). In terms of biological role, catalyzes the irreversible NADPH-dependent deamination of GMP to IMP. It functions in the conversion of nucleobase, nucleoside and nucleotide derivatives of G to A nucleotides, and in maintaining the intracellular balance of A and G nucleotides. This chain is GMP reductase, found in Lactobacillus acidophilus (strain ATCC 700396 / NCK56 / N2 / NCFM).